Consider the following 484-residue polypeptide: Putative sodium/proton-dependent alanine carrier protein YrbD (484 aa).

The next 11 helical transmembrane spans lie at 11 to 31 (VLWS…FSIM), 66 to 88 (ALSG…FGGP), 92 to 114 (FWMW…LAQI), 139 to 159 (WFAV…MPGV), 172 to 192 (FGIS…FIIF), 205 to 225 (IVPF…VMNV), 238 to 258 (SAFA…SWGV), 292 to 312 (AFSV…MILF), 350 to 370 (GFGA…TIMA), 390 to 410 (WAML…TVKT), and 416 to 436 (ALGD…IVLL).

The protein belongs to the alanine or glycine:cation symporter (AGCS) (TC 2.A.25) family.

It is found in the cell membrane. In Bacillus subtilis (strain 168), this protein is Putative sodium/proton-dependent alanine carrier protein YrbD (yrbD).